We begin with the raw amino-acid sequence, 185 residues long: UPF0149 protein PFL_5969 (185 aa).

Belongs to the UPF0149 family.

The protein is UPF0149 protein PFL_5969 of Pseudomonas fluorescens (strain ATCC BAA-477 / NRRL B-23932 / Pf-5).